Reading from the N-terminus, the 1427-residue chain is A disintegrin and metalloproteinase with thrombospondin motifs 13 (1427 aa).

The signal sequence occupies residues Met-1 to Gly-29. Positions Pro-30–Arg-74 are excised as a propeptide. A disordered region spans residues Ser-51–Gln-70. In terms of domain architecture, Peptidase M12B spans Leu-80–Pro-286. Glu-83 serves as a coordination point for Ca(2+). 2 N-linked (GlcNAc...) asparagine glycosylation sites follow: Asn-142 and Asn-146. 3 disulfide bridges follow: Cys-155–Cys-208, Cys-202–Cys-281, and Cys-242–Cys-265. Ca(2+)-binding residues include Asp-173, Asp-182, Glu-184, Asp-187, and Glu-212. Residue His-224 coordinates Zn(2+). Glu-225 is an active-site residue. Zn(2+) contacts are provided by His-228 and His-234. Ca(2+) contacts are provided by Cys-281 and Asp-284. The Disintegrin domain occupies Arg-287–Val-383. 4 cysteine pairs are disulfide-bonded: Cys-311-Cys-337, Cys-322-Cys-347, Cys-332-Cys-366, and Cys-360-Cys-371. Residues His-384–Glu-439 enclose the TSP type-1 1 domain. A glycan (C-linked (Man) tryptophan) is linked at Trp-387. 8 disulfide bridges follow: Cys-396/Cys-433, Cys-400/Cys-438, Cys-411/Cys-423, Cys-450/Cys-487, Cys-483/Cys-522, Cys-508/Cys-527, Cys-532/Cys-548, and Cys-545/Cys-555. The O-linked (Fuc...) serine glycan is linked to Ser-399. Residues Lys-440 to Ser-556 form a cysteine-rich region. Positions Arg-498–Asp-500 match the Cell attachment site motif. N-linked (GlcNAc...) asparagine glycosylation is found at Asn-552, Asn-579, and Asn-614. Residues Ser-556 to Ala-685 form a spacer region. The N-linked (GlcNAc...) (complex) asparagine glycan is linked to Asn-667. 7 consecutive TSP type-1 domains span residues Pro-682 to Pro-730, Cys-742 to Pro-805, Trp-808 to Cys-859, Val-896 to Pro-950, Cys-951 to Pro-1011, Cys-1012 to Leu-1068, and Cys-1072 to Val-1131. Ser-698 carries an O-linked (Fuc...) serine glycan. A glycan (N-linked (GlcNAc...) (complex) asparagine) is linked at Asn-707. A glycan (O-linked (Fuc...) serine) is linked at Ser-757. Asn-828 is a glycosylation site (N-linked (GlcNAc...) asparagine). O-linked (Fuc...) serine glycosylation is found at Ser-907, Ser-965, Ser-1027, and Ser-1087. 2 CUB domains span residues Cys-1192–Glu-1298 and Cys-1299–Thr-1427. N-linked (GlcNAc...) asparagine glycans are attached at residues Asn-1235 and Asn-1354.

Requires Zn(2+) as cofactor. The cofactor is Ca(2+). In terms of processing, glycosylated. O-fucosylated by POFUT2 on a serine or a threonine residue found within the consensus sequence C1-X(2)-(S/T)-C2-G of the TSP type-1 repeat domains where C1 and C2 are the first and second cysteine residue of the repeat, respectively. Fucosylated repeats can then be further glycosylated by the addition of a beta-1,3-glucose residue by the glucosyltransferase, B3GALTL. Fucosylation mediates the efficient secretion of ADAMTS13. May also be C-glycosylated on tryptophan residues within the consensus sequence W-X-X-W of the TPRs, and also N-glycosylated. These other glycosylations can also facilitate secretion. Post-translationally, the precursor is processed by a furin endopeptidase which cleaves off the pro-domain. Plasma. Expressed primarily in liver.

It is found in the secreted. It catalyses the reaction The enzyme cleaves the von Willebrand factor at bond 842-Tyr-|-Met-843 within the A2 domain.. Zinc and calcium ions cooperatively modulate enzyme activity. The cleavage of the pro-domain is not required for protease activity. Dependence on calcium for proteolytic activity is mediated by the high affinity site. Cleaves the vWF multimers in plasma into smaller forms thereby controlling vWF-mediated platelet thrombus formation. This chain is A disintegrin and metalloproteinase with thrombospondin motifs 13 (ADAMTS13), found in Homo sapiens (Human).